Here is a 275-residue protein sequence, read N- to C-terminus: Enoyl-[acyl-carrier-protein] reductase [NADH] FabI (275 aa).

NAD(+)-binding positions include Gly13, 19 to 20 (SI), 64 to 65 (DV), and Val92. Ala95 serves as a coordination point for substrate. Catalysis depends on proton acceptor residues Tyr145 and Tyr155. Residues Lys162 and 191-195 (IRTLA) each bind NAD(+).

This sequence belongs to the short-chain dehydrogenases/reductases (SDR) family. FabI subfamily. As to quaternary structure, homotetramer.

It carries out the reaction a 2,3-saturated acyl-[ACP] + NAD(+) = a (2E)-enoyl-[ACP] + NADH + H(+). Its pathway is lipid metabolism; fatty acid biosynthesis. Catalyzes the reduction of a carbon-carbon double bond in an enoyl moiety that is covalently linked to an acyl carrier protein (ACP). Involved in the elongation cycle of fatty acid which are used in the lipid metabolism. The chain is Enoyl-[acyl-carrier-protein] reductase [NADH] FabI (fabI) from Helicobacter pylori (strain ATCC 700392 / 26695) (Campylobacter pylori).